A 174-amino-acid chain; its full sequence is Gamma-crystallin F (174 aa).

Beta/gamma crystallin 'Greek key' domains follow at residues Gly2–Ser40 and Gly41–Pro83. A connecting peptide region spans residues His84 to Ser87. Beta/gamma crystallin 'Greek key' domains lie at His88 to Glu128 and Gly129 to Val171.

Belongs to the beta/gamma-crystallin family.

Its function is as follows. Crystallins are the dominant structural components of the vertebrate eye lens. In Bos taurus (Bovine), this protein is Gamma-crystallin F (CRYGF).